Reading from the N-terminus, the 280-residue chain is Phosphatidylserine decarboxylase proenzyme (280 aa).

Residues aspartate 88, histidine 145, and serine 249 each act as charge relay system; for autoendoproteolytic cleavage activity in the active site. The active-site Schiff-base intermediate with substrate; via pyruvic acid; for decarboxylase activity is the serine 249. The residue at position 249 (serine 249) is a Pyruvic acid (Ser); by autocatalysis.

Belongs to the phosphatidylserine decarboxylase family. PSD-B subfamily. Prokaryotic type I sub-subfamily. As to quaternary structure, heterodimer of a large membrane-associated beta subunit and a small pyruvoyl-containing alpha subunit. The cofactor is pyruvate. Post-translationally, is synthesized initially as an inactive proenzyme. Formation of the active enzyme involves a self-maturation process in which the active site pyruvoyl group is generated from an internal serine residue via an autocatalytic post-translational modification. Two non-identical subunits are generated from the proenzyme in this reaction, and the pyruvate is formed at the N-terminus of the alpha chain, which is derived from the carboxyl end of the proenzyme. The autoendoproteolytic cleavage occurs by a canonical serine protease mechanism, in which the side chain hydroxyl group of the serine supplies its oxygen atom to form the C-terminus of the beta chain, while the remainder of the serine residue undergoes an oxidative deamination to produce ammonia and the pyruvoyl prosthetic group on the alpha chain. During this reaction, the Ser that is part of the protease active site of the proenzyme becomes the pyruvoyl prosthetic group, which constitutes an essential element of the active site of the mature decarboxylase.

Its subcellular location is the cell membrane. It catalyses the reaction a 1,2-diacyl-sn-glycero-3-phospho-L-serine + H(+) = a 1,2-diacyl-sn-glycero-3-phosphoethanolamine + CO2. The protein operates within phospholipid metabolism; phosphatidylethanolamine biosynthesis; phosphatidylethanolamine from CDP-diacylglycerol: step 2/2. Its function is as follows. Catalyzes the formation of phosphatidylethanolamine (PtdEtn) from phosphatidylserine (PtdSer). The protein is Phosphatidylserine decarboxylase proenzyme of Chromobacterium violaceum (strain ATCC 12472 / DSM 30191 / JCM 1249 / CCUG 213 / NBRC 12614 / NCIMB 9131 / NCTC 9757 / MK).